Reading from the N-terminus, the 55-residue chain is MVVDRKEEKKVAVTLRLTTEENEILNRIKEKYNISKSDATGILIKKYAKEEYGAF.

It belongs to the transcriptional regulatory CopG/NikR family.

Acts in trans as a negative regulatory element in pE194 replication. The protein is Cop-6 protein of Staphylococcus aureus.